Reading from the N-terminus, the 206-residue chain is Dephospho-CoA kinase (206 aa).

A DPCK domain is found at 4–200 (TVALTGGIGS…ASYLKLASQF (197 aa)). Residue 12 to 17 (GSGKST) coordinates ATP.

It belongs to the CoaE family.

It is found in the cytoplasm. It carries out the reaction 3'-dephospho-CoA + ATP = ADP + CoA + H(+). Its pathway is cofactor biosynthesis; coenzyme A biosynthesis; CoA from (R)-pantothenate: step 5/5. Its function is as follows. Catalyzes the phosphorylation of the 3'-hydroxyl group of dephosphocoenzyme A to form coenzyme A. This is Dephospho-CoA kinase from Salmonella paratyphi A (strain ATCC 9150 / SARB42).